The primary structure comprises 485 residues: Glycogen synthase (485 aa).

Lys15 serves as a coordination point for ADP-alpha-D-glucose.

It belongs to the glycosyltransferase 1 family. Bacterial/plant glycogen synthase subfamily.

It catalyses the reaction [(1-&gt;4)-alpha-D-glucosyl](n) + ADP-alpha-D-glucose = [(1-&gt;4)-alpha-D-glucosyl](n+1) + ADP + H(+). It functions in the pathway glycan biosynthesis; glycogen biosynthesis. In terms of biological role, synthesizes alpha-1,4-glucan chains using ADP-glucose. This chain is Glycogen synthase, found in Rhodospirillum rubrum (strain ATCC 11170 / ATH 1.1.1 / DSM 467 / LMG 4362 / NCIMB 8255 / S1).